An 861-amino-acid chain; its full sequence is Nuclear pore complex protein NUP93A (861 aa).

This sequence belongs to the nucleoporin interacting component (NIC) family. As to quaternary structure, part of the nuclear pore complex (NPC). The NPC has an eight-fold symmetrical structure comprising a central transport channel and two rings, the cytoplasmic and nuclear rings, to which eight filaments are attached. The cytoplasmic filaments have loose ends, while the nuclear filaments are joined in a distal ring, forming a nuclear basket. NPCs are highly dynamic in configuration and composition, and can be devided in 3 subcomplexes, the NUP62 subcomplex, the NUP107-160 subcomplex and the NUP93 subcomplex, containing approximately 30 different nucleoporin proteins.

It localises to the nucleus envelope. It is found in the nucleus. Its subcellular location is the nuclear pore complex. This Arabidopsis thaliana (Mouse-ear cress) protein is Nuclear pore complex protein NUP93A.